A 1541-amino-acid chain; its full sequence is Regulator of G-protein signaling loco (1541 aa).

The tract at residues 1–66 (MHHHHPPLPI…RRKKRANYNY (66 aa)) is disordered. Positions 11–36 (TGASGSTAVGTGAAAAEDASPAANSG) are enriched in low complexity. Polar residues predominate over residues 40–53 (ISTSTTPSGSNSQQ). The PDZ domain maps to 71-148 (TVEVRRGYNG…SIRMQIAENY (78 aa)). Residues 182–222 (AKLHRLRNSPQKKLNPPEAVEPHKSKSSPDHPTLKPVLEDP) are disordered. The span at 201 to 214 (VEPHKSKSSPDHPT) shows a compositional bias: basic and acidic residues. In terms of domain architecture, PID spans 247-423 (AALECRVIVG…VVNLVRSMYT (177 aa)). Disordered stretches follow at residues 449-473 (GAVA…SNSD) and 708-761 (SEPD…ASMN). Composition is skewed to polar residues over residues 457–473 (PQPS…SNSD) and 744–761 (EQQQ…ASMN). One can recognise an RGS domain in the interval 827-943 (SFERMLQDAA…IRSDLYKSCV (117 aa)). Residues 978–1004 (SASNAEDRRRKSLLPWHRKTRSKSRDR) are disordered. Residues 987–999 (RKSLLPWHRKTRS) are compositionally biased toward basic residues. 2 consecutive RBD domains span residues 1072 to 1142 (SLCR…IERR) and 1143 to 1213 (VAFK…IVMV). The segment at 1258 to 1327 (DAAASEKSRP…SEEAATTQAV (70 aa)) is disordered. Polar residues predominate over residues 1273 to 1285 (MKSNEAPSETSSL). Over residues 1312 to 1325 (TSSSQQSEEAATTQ) the composition is skewed to low complexity. The GoLoco domain maps to 1354-1376 (QDELLEGLKRAQLARLEDQRGTE). The disordered stretch occupies residues 1410-1513 (KVPATPTEIP…ASKPGTFASK (104 aa)). The segment covering 1460 to 1469 (APPPLPPKPK) has biased composition (pro residues). Polar residues predominate over residues 1483 to 1499 (PTGNYCNKYSPSKQVPT).

Interacts (via GoLoco and RGS domains) with Galphai (via GDP- or GTP-bound forms). As to expression, expressed in surface and longitudinal glial cells, gut and heart (at protein level).

The protein localises to the cytoplasm. Its subcellular location is the cell membrane. The protein resides in the apical cell membrane. Acts as a regulator of G protein signaling (RGS). Modulates G protein alpha subunits nucleotide exchange and hydrolysis activities by functioning either as a GTPase-activating protein (GAP), thereby driving G protein alpha subunits into their inactive GDP-bound form, or as a GDP-dissociation inhibitor (GDI). Confers GDI and GAP activities on G(i) alpha subunit Galphai. Confers GAP activity on G(o)-alpha subunit Galphao and G(i) alpha subunit Galphai. Involved in the dorsal-ventral axis formation of the egg. Acts as a G-protein signaling for glial cell differentiation during embryogenesis; Galphai, Galphao and the G-protein coupled receptor, moody, are required in the surface glia to achieve effective insulation of the nerve cord. May be essential for nurse cell dumping during oogenesis. Required in neuroblast asymmetrical cell division. Plays a role in stress resistance and life span control. This is Regulator of G-protein signaling loco (loco) from Drosophila melanogaster (Fruit fly).